The chain runs to 441 residues: Ribosomal protein uS12 methylthiotransferase RimO (441 aa).

The region spanning proline 8–proline 118 is the MTTase N-terminal domain. [4Fe-4S] cluster is bound by residues cysteine 17, cysteine 53, cysteine 82, cysteine 150, cysteine 154, and cysteine 157. Residues leucine 136–glutamate 373 form the Radical SAM core domain. One can recognise a TRAM domain in the interval glutamine 376–valine 441.

This sequence belongs to the methylthiotransferase family. RimO subfamily. The cofactor is [4Fe-4S] cluster.

The protein localises to the cytoplasm. The enzyme catalyses L-aspartate(89)-[ribosomal protein uS12]-hydrogen + (sulfur carrier)-SH + AH2 + 2 S-adenosyl-L-methionine = 3-methylsulfanyl-L-aspartate(89)-[ribosomal protein uS12]-hydrogen + (sulfur carrier)-H + 5'-deoxyadenosine + L-methionine + A + S-adenosyl-L-homocysteine + 2 H(+). In terms of biological role, catalyzes the methylthiolation of an aspartic acid residue of ribosomal protein uS12. This chain is Ribosomal protein uS12 methylthiotransferase RimO, found in Cronobacter sakazakii (strain ATCC BAA-894) (Enterobacter sakazakii).